We begin with the raw amino-acid sequence, 239 residues long: Probable transcriptional regulatory protein BT9727_0453 (239 aa).

The protein belongs to the TACO1 family. YeeN subfamily.

It localises to the cytoplasm. This Bacillus thuringiensis subsp. konkukian (strain 97-27) protein is Probable transcriptional regulatory protein BT9727_0453.